The following is a 169-amino-acid chain: Ribosome maturation factor RimM (169 aa).

The PRC barrel domain maps to 97 to 169 (PGEYYWYQLI…VITVDWDMNF (73 aa)).

Belongs to the RimM family. As to quaternary structure, binds ribosomal protein uS19.

It localises to the cytoplasm. Functionally, an accessory protein needed during the final step in the assembly of 30S ribosomal subunit, possibly for assembly of the head region. Essential for efficient processing of 16S rRNA. May be needed both before and after RbfA during the maturation of 16S rRNA. It has affinity for free ribosomal 30S subunits but not for 70S ribosomes. This chain is Ribosome maturation factor RimM, found in Legionella pneumophila (strain Paris).